A 197-amino-acid chain; its full sequence is Elongation factor Ts (197 aa).

Positions 81–84 are involved in Mg(2+) ion dislocation from EF-Tu; sequence TDFV.

This sequence belongs to the EF-Ts family.

It localises to the cytoplasm. Associates with the EF-Tu.GDP complex and induces the exchange of GDP to GTP. It remains bound to the aminoacyl-tRNA.EF-Tu.GTP complex up to the GTP hydrolysis stage on the ribosome. This Coprothermobacter proteolyticus (strain ATCC 35245 / DSM 5265 / OCM 4 / BT) protein is Elongation factor Ts.